The chain runs to 274 residues: Bis(5'-nucleosyl)-tetraphosphatase, symmetrical (274 aa).

Belongs to the Ap4A hydrolase family.

The catalysed reaction is P(1),P(4)-bis(5'-adenosyl) tetraphosphate + H2O = 2 ADP + 2 H(+). In terms of biological role, hydrolyzes diadenosine 5',5'''-P1,P4-tetraphosphate to yield ADP. The polypeptide is Bis(5'-nucleosyl)-tetraphosphatase, symmetrical (Shewanella sp. (strain MR-7)).